Here is a 98-residue protein sequence, read N- to C-terminus: Growth-regulated protein homolog gamma (98 aa).

An N-terminal signal peptide occupies residues 1–29 (MAPAASSAPRLLRAAMLLLLLVAAGRRAA). Intrachain disulfides connect Cys-39/Cys-65 and Cys-41/Cys-81.

Belongs to the intercrine alpha (chemokine CxC) family.

The protein localises to the secreted. The chain is Growth-regulated protein homolog gamma from Bos taurus (Bovine).